Reading from the N-terminus, the 823-residue chain is DNA ligase (823 aa).

NAD(+) is bound by residues 32–36 (DAEYD), 81–82 (SL), and Glu-121. The active-site N6-AMP-lysine intermediate is Lys-123. Arg-144, Glu-181, Lys-299, and Lys-323 together coordinate NAD(+). 4 residues coordinate Zn(2+): Cys-449, Cys-452, Cys-467, and Cys-473. Residues 528-558 (ETADKGSSENENGDAETVSGDLSKYNTQNGK) are disordered. The BRCT domain occupies 746 to 823 (GINKAVAGKT…SEAELLTLLC (78 aa)).

It belongs to the NAD-dependent DNA ligase family. LigA subfamily. It depends on Mg(2+) as a cofactor. The cofactor is Mn(2+).

It catalyses the reaction NAD(+) + (deoxyribonucleotide)n-3'-hydroxyl + 5'-phospho-(deoxyribonucleotide)m = (deoxyribonucleotide)n+m + AMP + beta-nicotinamide D-nucleotide.. DNA ligase that catalyzes the formation of phosphodiester linkages between 5'-phosphoryl and 3'-hydroxyl groups in double-stranded DNA using NAD as a coenzyme and as the energy source for the reaction. It is essential for DNA replication and repair of damaged DNA. The protein is DNA ligase of Neisseria gonorrhoeae (strain NCCP11945).